Reading from the N-terminus, the 397-residue chain is Odorant receptor 22a (397 aa).

Topologically, residues 1–49 (MLSKFFPHIKEKPLSERVKSRDAFIYLDRVMWSFGWTEPENKRWILPYK) are cytoplasmic. A helical transmembrane segment spans residues 50 to 70 (LWLAFVNIVMLILLPISISIE). Residues 71–86 (YLHRFKTFSAGEFLSS) lie on the Extracellular side of the membrane. The chain crosses the membrane as a helical span at residues 87–107 (LEIGVNMYGSSFKCAFTLIGF). Topologically, residues 108–136 (KKRQEAKVLLDQLDKRCLSDKERSTVHRY) are cytoplasmic. A helical membrane pass occupies residues 137-157 (VAMGNFFDILYHIFYSTFVVM). The Extracellular segment spans residues 158-182 (NFPYFLLERRHAWRMYFPYIDSDEQ). Residues 183–203 (FYISSIAECFLMTEAIYMDLC) traverse the membrane as a helical segment. The Cytoplasmic segment spans residues 204 to 263 (TDVCPLISMLMARCHISLLKQRLRNLRSKPGRTEDEYLEELTECIRDHRLLLDYVDALRP). Residues 264-280 (VFSGTIFVQFLLIGTVL) form a helical membrane-spanning segment. The Extracellular segment spans residues 281–286 (GLSMIN). A helical membrane pass occupies residues 287 to 304 (LMFFSTFWTGVATCLFMF). The Cytoplasmic segment spans residues 305–356 (DVSMETFPFCYLCNMIIDDCQEMSNCLFQSDWTSADRRYKSTLVYFLHNLQQ). A helical membrane pass occupies residues 357-377 (PITLTAGGVFPISMQTNLAMV). Topologically, residues 378–397 (KLAFSVVTVIKQFNLAERFQ) are extracellular.

The protein belongs to the insect chemoreceptor superfamily. Heteromeric odorant receptor channel (TC 1.A.69) family. Or2a subfamily. As to quaternary structure, interacts with Orco, via conserved C-terminal cytoplasmic loops. Complexes exist early in the endomembrane system in olfactory sensory neurons (OSNs), coupling these complexes to the conserved ciliary trafficking pathway. Interacts with snmp1. Expressed with Orco in 17-20 sensory neurons on the medial-proximal edge of the antenna. Expressed in the ab3A neuron which responds to ethyl butyrate.

Its subcellular location is the cell membrane. Functionally, odorant receptor which mediates acceptance or avoidance behavior, depending on its substrates. The odorant receptor repertoire encodes a large collection of odor stimuli that vary widely in identity, intensity, and duration. Involved in the behavioral responses ethyl butyrate and to esters in more general. Complexes with Orco to form odorant-sensing units, providing sensitive and prolonged odorant signaling and calcium permeability. They are necessary and sufficient to promote functional reconstitution of odor-evoked signaling in sensory neurons that normally respond only to carbon dioxide. In Drosophila melanogaster (Fruit fly), this protein is Odorant receptor 22a (Or22a).